The following is a 929-amino-acid chain: Facilitated trehalose transporter Tret1 (929 aa).

Residues Met-1 to Ser-275 are disordered. The Cytoplasmic portion of the chain corresponds to Met-1–Pro-462. Residues Gly-10–Gly-26 show a composition bias toward gly residues. Basic and acidic residues predominate over residues Lys-41–Glu-59. Residues Ser-60 to Asp-72 are compositionally biased toward polar residues. Composition is skewed to low complexity over residues Ala-85 to Arg-141, Gln-168 to Gln-178, and Ser-237 to Asp-254. 3 positions are modified to phosphoserine: Ser-320, Ser-321, and Ser-322. The segment at Val-352–Arg-371 is disordered. Phosphoserine occurs at positions 392 and 394. Residues Phe-398 to Arg-420 are disordered. Over residues Arg-402–Thr-413 the composition is skewed to polar residues. A helical transmembrane segment spans residues Ile-463–Gly-483. Topologically, residues Phe-484 to Ser-512 are extracellular. Asn-500 carries an N-linked (GlcNAc...) asparagine glycan. A helical membrane pass occupies residues Trp-513–Ile-533. Over Glu-534–Thr-541 the chain is Cytoplasmic. Residues Ile-542–Val-562 form a helical membrane-spanning segment. Residues Pro-563 to Arg-569 lie on the Extracellular side of the membrane. Residues Phe-570–Thr-590 traverse the membrane as a helical segment. The Cytoplasmic segment spans residues Val-591–Arg-596. The chain crosses the membrane as a helical span at residues Gly-597–Ala-617. The Extracellular segment spans residues Gly-618–Ser-624. A helical transmembrane segment spans residues Met-625 to Pro-645. Residues Glu-646–Pro-708 lie on the Cytoplasmic side of the membrane. The helical transmembrane segment at Leu-709–Phe-729 threads the bilayer. At Tyr-730–Asn-745 the chain is on the extracellular side. Residues Val-746–Ile-766 form a helical membrane-spanning segment. The Cytoplasmic portion of the chain corresponds to Asp-767 to Lys-772. The helical transmembrane segment at Ile-773 to Phe-793 threads the bilayer. At Tyr-794–Asn-804 the chain is on the extracellular side. The helical transmembrane segment at Val-805–Gly-825 threads the bilayer. Residues Pro-826–Lys-839 are Cytoplasmic-facing. A helical transmembrane segment spans residues Ile-840–Thr-860. Residues Lys-861–His-873 are Extracellular-facing. The helical transmembrane segment at Gly-874–Val-894 threads the bilayer. Residues Pro-895 to Met-929 lie on the Cytoplasmic side of the membrane. 2 positions are modified to phosphoserine: Ser-917 and Ser-918.

This sequence belongs to the major facilitator superfamily. Sugar transporter (TC 2.A.1.1) family. Trehalose transporter subfamily.

It is found in the cell membrane. In terms of biological role, low-capacity facilitative transporter for trehalose. Does not transport maltose, sucrose or lactose. Mediates the bidirectional transfer of trehalose. Responsible for the transport of trehalose synthesized in the fat body and the incorporation of trehalose into other tissues that require a carbon source, thereby regulating trehalose levels in the hemolymph. The sequence is that of Facilitated trehalose transporter Tret1 from Drosophila grimshawi (Hawaiian fruit fly).